Here is a 277-residue protein sequence, read N- to C-terminus: uncharacterized protein (277 aa).

Disordered regions lie at residues 1 to 103 and 254 to 277; these read PPLR…LEDP and PSPS…SPPR. The span at 48-65 shows a compositional bias: basic and acidic residues; it reads RRNDTGKDRGTHRQRAET. A compositionally biased stretch (polar residues) spans 66-77; it reads PSRSPVPTTNTV. Over residues 82 to 91 the composition is skewed to basic residues; that stretch reads PAVRRQRRTQ.

This is an uncharacterized protein from Homo sapiens (Human).